Consider the following 1321-residue polypeptide: MELEDGVVYQEEPGGSGAVMSERVSGLAGSIYREFERLIGRYDEEVVKELMPLVVAVLENLDSVFAQDQEHQVELELLRDDNEQLITQYEREKALRKHAEEKFIEFEDSQEQEKKDLQTRVESLESQTRQLELKAKNYADQISRLEEREAELKKEYNALHQRHTEMIHNYMEHLERTKLHQLSGSDQLEATAHSRIRKERPISLGIFPLPAGDGLLTPDTQKGGETPGSEQWKFQELSQPRSHTSLKVSHSPEPPKAVEQEDELSDISQGGSKATTPASTANSDVSAIPPDTPSKEDNEGFVKGTDTSNKSEISKHIEVQVAQETRNVSTESGENEEKSEVQAIIESTPELDMDKDLSGYKGSSTPTKGIENKAFDRNTESLFEELSSAGSGLIGDVDEGADLLGMGREVENLILENTQLLETKNALNVVKNDLIAKVDELTCEKDVLQGELEAVKQAKLKLEDKNRELEEELRKARAEAEDARQKAKDDDDSDIPTAQRKRFTRVEMARVLMERNQYKERLMELQEAVRWTEMIRASRENPAMQEKKRSSIWQFFSRLFSSSSNATKKPEPPVNLKYNAPTSHVTPSVKKRSSTLSQLPGDKSKAFDFLSEETEASLASRREQKREQYRQVKAHVQKEDGRVQAFGWSLPQKYKQVANGQGETKMKNLPVPVYLRPLDEKDASMKLWCAVGVNLSGGKTRDGGSVVGASVFYKDIAGLDTEGSKQRSASQSSLDKLDQELKEQQKEFKNQEELSSQVWICTSTHSTTKVIIIDAVQPGNILDSFTVCNSHVLCIASVPGARETDYPAGEELSESGQVDKASLCGSMTSNSSAEMDSLLGGITVVGCSTEGLTGAATSPSTNGASPVIEKPPEMETENSEVDENIPTAEEATEATEGNAGSTEDTVDISQPGVYTEHVFTDPLGVQIPEDLSPVFQSSNDSDVYKDQISVLPNEQDLAREEAQKMSSLLPTMWLGAQNGCLYVHSSVAQWRKCLHSIKLKDSILSIVHVKGIVLVALADGTLAIFHRGVDGQWDLSNYHLLDLGRPHHSIRCMTVVHDKVWCGYRNKIYVVQPKAMKIEKSFDAHPRKESQVRQLAWVGDGVWVSIRLDSTLRLYHAHTYQHLQDVDIEPYVSKMLGTGKLGFSFVRITALMVSCNRLWVGTGNGVIISIPLTETNKTSGTPGNRPGSVIRVYGDENSDKVTPGTFIPYCSMAHAQLCFHGHRDAVKFFVAVPGQVISPQSSSGGADLTADKAGSSAQEPSSQTPLKSMLVISGGEGYIDFRMGDEGGESELLGEDLPLEPSVTKAERSHLIVWQVMCGNE.

Met1 carries the post-translational modification N-acetylmethionine. The RH1 domain maps to 7–95 (VVYQEEPGGS…ITQYEREKAL (89 aa)). Positions 66 to 166 (AQDQEHQVEL…NALHQRHTEM (101 aa)) form a coiled coil. A phosphoserine mark is found at Ser109, Ser183, Ser185, Ser194, and Ser203. Residues 203 to 308 (SLGIFPLPAG…EGFVKGTDTS (106 aa)) form a disordered region. Phosphothreonine is present on Thr217. A compositionally biased stretch (polar residues) spans 236 to 248 (ELSQPRSHTSLKV). Residues Ser238, Ser251, Ser265, Ser268, and Ser272 each carry the phosphoserine modification. Over residues 266-285 (DISQGGSKATTPASTANSDV) the composition is skewed to polar residues. Position 292 is a phosphothreonine (Thr292). Ser311, Ser329, Ser332, and Ser347 each carry phosphoserine. The segment covering 322–332 (AQETRNVSTES) has biased composition (polar residues). Residues 322 to 341 (AQETRNVSTESGENEEKSEV) are disordered. A phosphothreonine mark is found at Thr348, Thr365, and Thr418. A coiled-coil region spans residues 408 to 534 (REVENLILEN…LQEAVRWTEM (127 aa)). Residues 473 to 489 (LRKARAEAEDARQKAKD) are compositionally biased toward basic and acidic residues. 2 disordered regions span residues 473–500 (LRKA…TAQR) and 563–600 (SSNA…SQLP). An RH2 domain is found at 500–604 (RKRFTRVEMA…TLSQLPGDKS (105 aa)). Thr586 is modified (phosphothreonine). Residue Ser588 is modified to Phosphoserine. Thr595 is modified (phosphothreonine). Phosphoserine is present on residues Ser705, Ser728, Ser730, Ser732, and Ser733. Positions 724–758 (SKQRSASQSSLDKLDQELKEQQKEFKNQEELSSQV) form a coiled coil. Positions 853–883 (TGAATSPSTNGASPVIEKPPEMETENSEVDE) are disordered. The segment covering 855–864 (AATSPSTNGA) has biased composition (polar residues). The span at 874 to 883 (METENSEVDE) shows a compositional bias: acidic residues. Residue Ser1188 is modified to Phosphoserine. The segment at 1239 to 1267 (PQSSSGGADLTADKAGSSAQEPSSQTPLK) is disordered. Residues 1255–1266 (SSAQEPSSQTPL) show a composition bias toward polar residues. Position 1264 is a phosphothreonine (Thr1264).

This sequence belongs to the JIP scaffold family. As to quaternary structure, homodimer. The homodimer interacts with ARF6, forming a heterotetramer. Homooligomer. Interacts with MAX, MAPK8, MAPK14, MAP3K3, MYC, and MAP2K4. Interacts with KNS2. Interaction with KNS2 is important in the formation of ternary complex with MAPK8. Interacts with PIP4P1. Interacts with PIKFYVE. In terms of processing, phosphorylated by MAPK8 and MAPK14. In terms of tissue distribution, highly expressed in brain, kidney, liver, heart.

It localises to the cytoplasm. Its subcellular location is the perinuclear region. The protein localises to the lysosome membrane. The JNK-interacting protein (JIP) group of scaffold proteins selectively mediates JNK signaling by aggregating specific components of the MAPK cascade to form a functional JNK signaling module. Regulates lysosomal positioning by acting as an adapter protein which links PIP4P1-positive lysosomes to the dynein-dynactin complex. Assists PIKFYVE selective functionality in microtubule-based endosome-to-TGN trafficking. The protein is C-Jun-amino-terminal kinase-interacting protein 4 of Mus musculus (Mouse).